The primary structure comprises 60 residues: Metallothionein A (60 aa).

Residues 1 to 28 (MDPCECSKSGNCNCGGSCTCTNCSCKSC) form a beta region. A divalent metal cation-binding residues include C4, C6, C12, C14, C18, C20, C23, C25, C28, C32, C33, C35, C36, C40, C43, C47, C49, C54, C58, and C59. The segment at 29–60 (KKSCCPCCPSGCTKCASGCVCKGKTCDTSCCQ) is alpha.

Belongs to the metallothionein superfamily. Type 1 family.

Functionally, metallothioneins have a high content of cysteine residues that bind various heavy metals. The protein is Metallothionein A (mta) of Parachaenichthys charcoti (Charcot's dragonfish).